The chain runs to 438 residues: 3-phosphoshikimate 1-carboxyvinyltransferase (438 aa).

Residues Lys-21, Ser-22, and Arg-26 each contribute to the 3-phosphoshikimate site. Lys-21 is a phosphoenolpyruvate binding site. Residues Gly-95 and Arg-123 each contribute to the phosphoenolpyruvate site. 3-phosphoshikimate is bound by residues Ser-167, Gln-169, Asp-315, and Lys-342. Gln-169 is a binding site for phosphoenolpyruvate. Catalysis depends on Asp-315, which acts as the Proton acceptor. Arg-346 and Arg-387 together coordinate phosphoenolpyruvate.

The protein belongs to the EPSP synthase family. As to quaternary structure, monomer.

The protein resides in the cytoplasm. It catalyses the reaction 3-phosphoshikimate + phosphoenolpyruvate = 5-O-(1-carboxyvinyl)-3-phosphoshikimate + phosphate. Its pathway is metabolic intermediate biosynthesis; chorismate biosynthesis; chorismate from D-erythrose 4-phosphate and phosphoenolpyruvate: step 6/7. Catalyzes the transfer of the enolpyruvyl moiety of phosphoenolpyruvate (PEP) to the 5-hydroxyl of shikimate-3-phosphate (S3P) to produce enolpyruvyl shikimate-3-phosphate and inorganic phosphate. This chain is 3-phosphoshikimate 1-carboxyvinyltransferase, found in Coxiella burnetii (strain RSA 331 / Henzerling II).